Consider the following 307-residue polypeptide: tRNA pseudouridine synthase B (307 aa).

Residue D38 is the Nucleophile of the active site.

Belongs to the pseudouridine synthase TruB family. Type 1 subfamily.

It catalyses the reaction uridine(55) in tRNA = pseudouridine(55) in tRNA. Its function is as follows. Responsible for synthesis of pseudouridine from uracil-55 in the psi GC loop of transfer RNAs. This is tRNA pseudouridine synthase B from Lachnoclostridium phytofermentans (strain ATCC 700394 / DSM 18823 / ISDg) (Clostridium phytofermentans).